Consider the following 337-residue polypeptide: Adenine deaminase (337 aa).

Residues His-17, His-19, and His-197 each coordinate Zn(2+). Glu-200 acts as the Proton donor in catalysis. Position 278 (Asp-278) interacts with Zn(2+). Asp-279 serves as a coordination point for substrate.

This sequence belongs to the metallo-dependent hydrolases superfamily. Adenosine and AMP deaminases family. Adenine deaminase type 2 subfamily. It depends on Zn(2+) as a cofactor.

It carries out the reaction adenine + H2O + H(+) = hypoxanthine + NH4(+). Its function is as follows. Catalyzes the hydrolytic deamination of adenine to hypoxanthine. Plays an important role in the purine salvage pathway and in nitrogen catabolism. The protein is Adenine deaminase of Zymomonas mobilis subsp. mobilis (strain ATCC 31821 / ZM4 / CP4).